Reading from the N-terminus, the 280-residue chain is Eukaryotic translation initiation factor 3 subunit F-1 (280 aa).

The 131-residue stretch at 8–138 (VRVHPVVLFQ…LRAYVCIQLG (131 aa)) folds into the MPN domain.

The protein belongs to the eIF-3 subunit F family. As to quaternary structure, component of the eukaryotic translation initiation factor 3 (eIF-3) complex. The eIF-3 complex interacts with pix.

The protein resides in the cytoplasm. Component of the eukaryotic translation initiation factor 3 (eIF-3) complex, which is involved in protein synthesis of a specialized repertoire of mRNAs and, together with other initiation factors, stimulates binding of mRNA and methionyl-tRNAi to the 40S ribosome. The eIF-3 complex specifically targets and initiates translation of a subset of mRNAs involved in cell proliferation. This chain is Eukaryotic translation initiation factor 3 subunit F-1, found in Drosophila yakuba (Fruit fly).